A 220-amino-acid chain; its full sequence is Urease accessory protein UreF (220 aa).

This sequence belongs to the UreF family. UreD, UreF and UreG form a complex that acts as a GTP-hydrolysis-dependent molecular chaperone, activating the urease apoprotein by helping to assemble the nickel containing metallocenter of UreC. The UreE protein probably delivers the nickel.

It localises to the cytoplasm. Its function is as follows. Required for maturation of urease via the functional incorporation of the urease nickel metallocenter. The sequence is that of Urease accessory protein UreF from Bordetella bronchiseptica (strain ATCC BAA-588 / NCTC 13252 / RB50) (Alcaligenes bronchisepticus).